The sequence spans 874 residues: Alanine--tRNA ligase (874 aa).

4 residues coordinate Zn(2+): His562, His566, Cys664, and His668.

This sequence belongs to the class-II aminoacyl-tRNA synthetase family. The cofactor is Zn(2+).

It localises to the cytoplasm. It catalyses the reaction tRNA(Ala) + L-alanine + ATP = L-alanyl-tRNA(Ala) + AMP + diphosphate. Functionally, catalyzes the attachment of alanine to tRNA(Ala) in a two-step reaction: alanine is first activated by ATP to form Ala-AMP and then transferred to the acceptor end of tRNA(Ala). Also edits incorrectly charged Ser-tRNA(Ala) and Gly-tRNA(Ala) via its editing domain. The sequence is that of Alanine--tRNA ligase from Neisseria gonorrhoeae (strain ATCC 700825 / FA 1090).